Consider the following 303-residue polypeptide: Peroxisomal trans-2-enoyl-CoA reductase (303 aa).

23-47 (VTGGATGIGKAIVKELLELGSNVVI) lines the NADP(+) pocket. N6-succinyllysine is present on lysine 32. Serine 49 carries the phosphoserine modification. The Proton acceptor role is filled by tyrosine 179. Phosphotyrosine is present on tyrosine 179. The Microbody targeting signal signature appears at 301–303 (AKL).

The protein belongs to the short-chain dehydrogenases/reductases (SDR) family. Interacts with PEX5, probably required to target it into peroxisomes.

The protein localises to the peroxisome. The enzyme catalyses a (2E)-enoyl-CoA + NADPH + H(+) = a 2,3-saturated acyl-CoA + NADP(+). It catalyses the reaction (2E)-hexenoyl-CoA + NADPH + H(+) = hexanoyl-CoA + NADP(+). It carries out the reaction (2E)-octenoyl-CoA + NADPH + H(+) = octanoyl-CoA + NADP(+). The catalysed reaction is (2E)-decenoyl-CoA + NADPH + H(+) = decanoyl-CoA + NADP(+). The enzyme catalyses (2E)-dodecenoyl-CoA + NADPH + H(+) = dodecanoyl-CoA + NADP(+). It catalyses the reaction (2E)-tetradecenoyl-CoA + NADPH + H(+) = tetradecanoyl-CoA + NADP(+). It participates in lipid metabolism; fatty acid biosynthesis. In terms of biological role, participates in chain elongation of fatty acids. Catalyzes the reduction of trans-2-enoyl-CoAs of varying chain lengths from 6:1 to 16:1, having maximum activity with 10:1 CoA. Has no 2,4-dienoyl-CoA reductase activity. The polypeptide is Peroxisomal trans-2-enoyl-CoA reductase (PECR) (Pongo abelii (Sumatran orangutan)).